Consider the following 256-residue polypeptide: Imidazole glycerol phosphate synthase subunit HisF (256 aa).

Residues Asp-12 and Asp-131 contribute to the active site.

This sequence belongs to the HisA/HisF family. In terms of assembly, heterodimer of HisH and HisF.

It is found in the cytoplasm. The enzyme catalyses 5-[(5-phospho-1-deoxy-D-ribulos-1-ylimino)methylamino]-1-(5-phospho-beta-D-ribosyl)imidazole-4-carboxamide + L-glutamine = D-erythro-1-(imidazol-4-yl)glycerol 3-phosphate + 5-amino-1-(5-phospho-beta-D-ribosyl)imidazole-4-carboxamide + L-glutamate + H(+). The protein operates within amino-acid biosynthesis; L-histidine biosynthesis; L-histidine from 5-phospho-alpha-D-ribose 1-diphosphate: step 5/9. IGPS catalyzes the conversion of PRFAR and glutamine to IGP, AICAR and glutamate. The HisF subunit catalyzes the cyclization activity that produces IGP and AICAR from PRFAR using the ammonia provided by the HisH subunit. This is Imidazole glycerol phosphate synthase subunit HisF from Pseudomonas entomophila (strain L48).